Consider the following 69-residue polypeptide: DNA-directed RNA polymerase subunit omega (69 aa).

This sequence belongs to the RNA polymerase subunit omega family. The RNAP catalytic core consists of 2 alpha, 1 beta, 1 beta' and 1 omega subunit. When a sigma factor is associated with the core the holoenzyme is formed, which can initiate transcription.

It carries out the reaction RNA(n) + a ribonucleoside 5'-triphosphate = RNA(n+1) + diphosphate. Its function is as follows. Promotes RNA polymerase assembly. Latches the N- and C-terminal regions of the beta' subunit thereby facilitating its interaction with the beta and alpha subunits. The sequence is that of DNA-directed RNA polymerase subunit omega from Exiguobacterium sp. (strain ATCC BAA-1283 / AT1b).